Consider the following 354-residue polypeptide: Erythroferrone (354 aa).

The N-terminal stretch at 1-28 (MAPARRPAGARLLLVYAGLLAAAAAGLG) is a signal peptide. Composition is skewed to low complexity over residues 26–37 (GLGSPEPGAPSR) and 51–62 (PRGPGESRAGPA). A disordered region spans residues 26–123 (GLGSPEPGAP…PGPPGPQGPP (98 aa)). Residues 69 to 80 (TAERAHSVDPRD) are compositionally biased toward basic and acidic residues. Over residues 94-107 (NGKKRSRGKAKKLK) the composition is skewed to basic residues. Residues Pro111, Pro113, Pro114, Pro116, Pro117, and Pro119 each carry the hydroxyproline modification. Pro residues predominate over residues 111-123 (PGPPGPPGPQGPP). Residues 199–354 (APRVEAAFLC…SHFSAVLLGV (156 aa)) form the C1q domain. N-linked (GlcNAc...) asparagine glycans are attached at residues Asn243, Asn295, and Asn333.

This sequence belongs to the adipolin/erythroferrone family. In terms of assembly, homodimer; disulfide-linked. Forms trimer, hexamers and higher molecular weight oligomers. May form heteromeric complexes with C1QTNF2 and C1QTNF12 and, to a lesser extent, with C1QTNF5 and C1QTNF10. Interacts with BMP5 and BMP7; the interaction inhibits BMP-induced transcription of HAMP. Interacts with BMP6; the interaction inhibits BMP-induced transcription of HAMP. Interacts with BMP2. Interacts with heterodimers composed of BMP2 and BMP6 in vitro, the interaction inhibits the heterodimer binding to its receptor BMPR1A /ALK3 and thereby suppresses expression of HAMP. In terms of processing, N-glycosylated; required for secretion of the mature protein.

The protein resides in the secreted. Functionally, iron-regulatory hormone that acts as an erythroid regulator after hemorrhage: produced by erythroblasts following blood loss and mediates suppression of hepcidin (HAMP) expression in the liver, thereby promoting increased iron absorption and mobilization from stores. Promotes lipid uptake into adipocytes and hepatocytes via transcriptional up-regulation of genes involved in fatty acid uptake. Inhibits apoptosis and inflammatory response in cardiomyocytes via promotion of sphingosine-1-phosphate (S1P) and cAMP-dependent activation of AKT signaling. Inhibits autophagy induced by nutrient deficiency in hepatocytes via promoting the phosphorylation of IRS1, AKT, and MTOR, and thereby subsequent activation of the AKT-MTOR signaling pathway. Negatively regulates the differentiation of osteoblasts, potentially via sequestering BMP2, and thereby inhibits the activation of SMAD signaling. The reduction in BMP2 signaling in osteoblasts also results in an increase in expression of the osteoclastogenesis-promoting factors TNFSF11/RANKL and SOST, thereby indirectly promotes bone resorption. The chain is Erythroferrone from Homo sapiens (Human).